Reading from the N-terminus, the 122-residue chain is UPF0382 membrane protein SAB0533 (122 aa).

A run of 4 helical transmembrane segments spans residues 3–23 (LFIILGALNAMMAVGTGAFGA), 46–66 (MYHGLALLIIGVISGTTSINV), 69–89 (AGWLIFAGIIFFSGSLYILVL), and 98–118 (ITPIGGVLFIIGWIMLIIATF).

It belongs to the UPF0382 family.

The protein localises to the cell membrane. This chain is UPF0382 membrane protein SAB0533, found in Staphylococcus aureus (strain bovine RF122 / ET3-1).